We begin with the raw amino-acid sequence, 88 residues long: Small ribosomal subunit protein uS15 (88 aa).

Belongs to the universal ribosomal protein uS15 family. As to quaternary structure, part of the 30S ribosomal subunit. Forms a bridge to the 50S subunit in the 70S ribosome, contacting the 23S rRNA.

Its function is as follows. One of the primary rRNA binding proteins, it binds directly to 16S rRNA where it helps nucleate assembly of the platform of the 30S subunit by binding and bridging several RNA helices of the 16S rRNA. In terms of biological role, forms an intersubunit bridge (bridge B4) with the 23S rRNA of the 50S subunit in the ribosome. The protein is Small ribosomal subunit protein uS15 of Leptospira interrogans serogroup Icterohaemorrhagiae serovar copenhageni (strain Fiocruz L1-130).